Here is a 475-residue protein sequence, read N- to C-terminus: Coronin-2B (475 aa).

WD repeat units lie at residues 80 to 120 (GHQG…LKRN), 130 to 172 (GHSR…KMID), 174 to 212 (HTDV…VLQE), 215 to 258 (CKNH…MPVT), and 260 to 303 (EEID…PYLT). Residues 431 to 470 (NELLRMFFKQQEEIRRLKEQLSQRDLLVRQLELELKNLRN) adopt a coiled-coil conformation.

It belongs to the WD repeat coronin family.

The protein resides in the cytoplasm. It is found in the cytoskeleton. Functionally, may play a role in the reorganization of neuronal actin structure. The chain is Coronin-2B (coro2b) from Xenopus laevis (African clawed frog).